Reading from the N-terminus, the 130-residue chain is uncharacterized protein (130 aa).

The helical transmembrane segment at 21-43 (VAVCTVAAEVLAIFTLVCTRVFI) threads the bilayer.

It localises to the membrane. This is an uncharacterized protein from Saccharomyces cerevisiae (strain ATCC 204508 / S288c) (Baker's yeast).